The following is a 358-amino-acid chain: Core-capsid bridging protein (358 aa).

Residues 296–331 form a disordered region; sequence PSITPTPGYRGTTFKPSRTRSTRRRRSVRRRSRRTA. Residues 312–329 are compositionally biased toward basic residues; the sequence is SRTRSTRRRRSVRRRSRR.

This sequence belongs to the adenoviridae core-capsid bridging protein family. As to quaternary structure, monomer. Homodimer. Exists in equilibrium between monomers and dimers in solution. Interacts with the histone-like nucleoprotein; this interactions bridge the virus core to the capsid. Interacts with core protein X; this interactions bridge the virus core to the capsid. Interacts with the endosome lysis protein VI; this interactions bridge the virus core to the capsid. Interacts with the peripentonal hexons. Interacts with host NPM1; this interaction might play a role in virus assembly.

The protein resides in the virion. Its subcellular location is the host nucleus. The protein localises to the host nucleolus. In terms of biological role, associates loosely with the viral DNA to form an outer shell around the nucleoprotein-DNA complex and links it with the capsid by binding the endosome lysis protein. Dissociates from the viral genome during entry. Might be involved in nuclear capsid assembly of the viral particles through its association with NPM1/nucleophosmin. The protein is Core-capsid bridging protein of Human adenovirus F serotype 40 (HAdV-40).